A 232-amino-acid chain; its full sequence is Ribonuclease 3 (232 aa).

Residues 5 to 134 (QTVLKNHFAI…FLGALLLDKD (130 aa)) form the RNase III domain. Position 47 (Glu47) interacts with Mg(2+). The active site involves Asp51. Mg(2+) contacts are provided by Asp120 and Glu123. Residue Glu123 is part of the active site. One can recognise a DRBM domain in the interval 160-229 (DYKTHLQELL…AKNAVEKGLD (70 aa)).

The protein belongs to the ribonuclease III family. As to quaternary structure, homodimer. Requires Mg(2+) as cofactor.

It localises to the cytoplasm. The catalysed reaction is Endonucleolytic cleavage to 5'-phosphomonoester.. Its function is as follows. Digests double-stranded RNA. Involved in the processing of primary rRNA transcript to yield the immediate precursors to the large and small rRNAs (23S and 16S). Processes some mRNAs, and tRNAs when they are encoded in the rRNA operon. Processes pre-crRNA and tracrRNA of type II CRISPR loci if present in the organism. The protein is Ribonuclease 3 of Streptococcus pneumoniae (strain Hungary19A-6).